The following is a 570-amino-acid chain: Urease subunit alpha (570 aa).

Positions 131–570 (GGFDSHIHFI…LPLAQRYFMF (440 aa)) constitute a Urease domain. Residues His136, His138, and Lys219 each contribute to the Ni(2+) site. N6-carboxylysine is present on Lys219. Residue His221 participates in substrate binding. Ni(2+)-binding residues include His248 and His274. His322 serves as the catalytic Proton donor. Residue Asp362 participates in Ni(2+) binding.

The protein belongs to the metallo-dependent hydrolases superfamily. Urease alpha subunit family. In terms of assembly, heterotrimer of UreA (gamma), UreB (beta) and UreC (alpha) subunits. Three heterotrimers associate to form the active enzyme. It depends on Ni cation as a cofactor. In terms of processing, carboxylation allows a single lysine to coordinate two nickel ions.

The protein localises to the cytoplasm. It carries out the reaction urea + 2 H2O + H(+) = hydrogencarbonate + 2 NH4(+). The protein operates within nitrogen metabolism; urea degradation; CO(2) and NH(3) from urea (urease route): step 1/1. The polypeptide is Urease subunit alpha (Rhodopseudomonas palustris (strain TIE-1)).